The following is a 178-amino-acid chain: MNQEVIAKRYASALFQIALEQQQLDRIEEDVRAVRQALAENGEFLSLLSNPNLSLEKKKALVREVFAGVSAPVKNTLLLLLERHRFGLVPELADQFIALANDARGIAEAIAYSARPLTDEELQALSDVFAKKVGKATLHIENIVEPELIGGVKLRIGNRIYDGSVSGQLERIQRQLIG.

The protein belongs to the ATPase delta chain family. As to quaternary structure, F-type ATPases have 2 components, F(1) - the catalytic core - and F(0) - the membrane proton channel. F(1) has five subunits: alpha(3), beta(3), gamma(1), delta(1), epsilon(1). F(0) has three main subunits: a(1), b(2) and c(10-14). The alpha and beta chains form an alternating ring which encloses part of the gamma chain. F(1) is attached to F(0) by a central stalk formed by the gamma and epsilon chains, while a peripheral stalk is formed by the delta and b chains.

It localises to the cell membrane. In terms of biological role, f(1)F(0) ATP synthase produces ATP from ADP in the presence of a proton or sodium gradient. F-type ATPases consist of two structural domains, F(1) containing the extramembraneous catalytic core and F(0) containing the membrane proton channel, linked together by a central stalk and a peripheral stalk. During catalysis, ATP synthesis in the catalytic domain of F(1) is coupled via a rotary mechanism of the central stalk subunits to proton translocation. Its function is as follows. This protein is part of the stalk that links CF(0) to CF(1). It either transmits conformational changes from CF(0) to CF(1) or is implicated in proton conduction. This chain is ATP synthase subunit delta, found in Geobacillus stearothermophilus (Bacillus stearothermophilus).